A 267-amino-acid polypeptide reads, in one-letter code: MIKEYLKKPSLSDVQLTRDTRNIPIGKVGVKDISYPIVVMDKNKSFQNTIARINMYVDLPHHFKGTHMSRFVEILNEYREEIALDKLELILSTMKEKLGASNAHLEMEFPYFVEKTAPVSRAKSLMEYTCTFSASLSDRFDFVLGIKVPVTSLCPCSKELSSYGAHNQRSIMTVQVRYSEFIWIEDLIEIIEQCGSSPVYSLLKREDEKFVTERAYENPRFVEDMVREATVRLLSMQNVTWFSVEAENFESIHKHSAYAAIERSRES.

The protein belongs to the GTP cyclohydrolase IV family.

It carries out the reaction GTP + H2O = 7,8-dihydroneopterin 3'-triphosphate + formate + H(+). The protein operates within cofactor biosynthesis; 7,8-dihydroneopterin triphosphate biosynthesis; 7,8-dihydroneopterin triphosphate from GTP: step 1/1. Functionally, converts GTP to 7,8-dihydroneopterin triphosphate. The sequence is that of GTP cyclohydrolase FolE2 from Citrifermentans bemidjiense (strain ATCC BAA-1014 / DSM 16622 / JCM 12645 / Bem) (Geobacter bemidjiensis).